Reading from the N-terminus, the 1662-residue chain is Cortactin-binding protein 2 (1662 aa).

Disordered stretches follow at residues 1–23, 203–222, 361–440, 454–479, and 498–618; these read MATD…AGAA, KKKT…RSTE, SHSD…LHPG, GNAN…PTSR, and RFTS…PSID. Residues 119-276 adopt a coiled-coil conformation; the sequence is KKMQERMSAQ…EQLKRGSDSK (158 aa). Residues 386-396 are compositionally biased toward low complexity; that stretch reads PSTDSTPDPTS. A compositionally biased stretch (polar residues) spans 411–422; it reads QTPGIAPQNSQA. Arg498 bears the Asymmetric dimethylarginine mark. Over residues 583-597 the composition is skewed to polar residues; sequence TVASPPSSLPQGNRV. ANK repeat units lie at residues 709–739, 743–772, 776–805, 809–838, 842–871, and 912–942; these read GRPT…DINY, DGHS…QINA, NGFT…NINH, GGQT…NRSV, DGWT…PACG, and EGWT…EPER. Positions 1450-1474 are disordered; it reads GESGAWRKVNTSPRRKSGRFSLPTW. Phosphoserine is present on Ser1524. 2 disordered regions span residues 1580–1602 and 1618–1662; these read SQKE…KSKT and SKVT…KPNK. The span at 1582 to 1599 shows a compositional bias: polar residues; it reads KEVSPLSSHQTTECSNSK. Over residues 1624–1638 the composition is skewed to low complexity; that stretch reads SQNTKRSSSSSNTRQ. The span at 1639 to 1648 shows a compositional bias: polar residues; that stretch reads IEINNNSKEN. Basic and acidic residues predominate over residues 1649–1662; that stretch reads WNLHKNEHLDKPNK.

As to quaternary structure, interacts with CTTN/cortactin SH3 domain. Interacts with STRN, STRN4/zinedin and MOB4/phocein; this interactions mediate the association with the STRIPAK core complex and may regulate dendritic spine distribution of the STRIPAK complex in hippocampal neurons. Activation of glutamate receptors weakens the interaction with STRN and STRN4.

The protein resides in the cytoplasm. The protein localises to the cell cortex. It is found in the cell projection. It localises to the dendritic spine. Regulates the dendritic spine distribution of CTTN/cortactin in hippocampal neurons, and thus controls dendritic spinogenesis and dendritic spine maintenance. Associates with the striatin-interacting phosphatase and kinase (STRIPAK) core complex to regulate dendritic spine distribution of the STRIPAK complex in hippocampal neurons. The protein is Cortactin-binding protein 2 (CTTNBP2) of Chlorocebus aethiops (Green monkey).